Here is a 44-residue protein sequence, read N- to C-terminus: Cuticle protein CP459 (44 aa).

2 consecutive repeat copies span residues 3 to 20 and 27 to 44.

Calcified shell.

This Cancer pagurus (Rock crab) protein is Cuticle protein CP459.